A 613-amino-acid chain; its full sequence is tRNA 5-methylaminomethyl-2-thiouridine biosynthesis bifunctional protein MnmC (613 aa).

Residues 1 to 225 (MKKAKLIFKD…KREMIKAYLE (225 aa)) are tRNA (mnm(5)s(2)U34)-methyltransferase. The FAD-dependent cmnm(5)s(2)U34 oxidoreductase stretch occupies residues 252 to 613 (IGAGISSAVL…FLVRKLKKGL (362 aa)).

In the N-terminal section; belongs to the methyltransferase superfamily. tRNA (mnm(5)s(2)U34)-methyltransferase family. This sequence in the C-terminal section; belongs to the DAO family. FAD is required as a cofactor.

It localises to the cytoplasm. The enzyme catalyses 5-aminomethyl-2-thiouridine(34) in tRNA + S-adenosyl-L-methionine = 5-methylaminomethyl-2-thiouridine(34) in tRNA + S-adenosyl-L-homocysteine + H(+). Functionally, catalyzes the last two steps in the biosynthesis of 5-methylaminomethyl-2-thiouridine (mnm(5)s(2)U) at the wobble position (U34) in tRNA. Catalyzes the FAD-dependent demodification of cmnm(5)s(2)U34 to nm(5)s(2)U34, followed by the transfer of a methyl group from S-adenosyl-L-methionine to nm(5)s(2)U34, to form mnm(5)s(2)U34. The chain is tRNA 5-methylaminomethyl-2-thiouridine biosynthesis bifunctional protein MnmC from Campylobacter jejuni subsp. doylei (strain ATCC BAA-1458 / RM4099 / 269.97).